A 444-amino-acid polypeptide reads, in one-letter code: CCA-adding enzyme (444 aa).

2 residues coordinate ATP: Ser-57 and Arg-60. 2 residues coordinate CTP: Ser-57 and Arg-60. Mg(2+)-binding residues include Asp-69, Asp-71, and Asp-124. The ATP site is built by His-147, Lys-168, and Tyr-177. His-147, Lys-168, and Tyr-177 together coordinate CTP.

This sequence belongs to the tRNA nucleotidyltransferase/poly(A) polymerase family. Archaeal CCA-adding enzyme subfamily. As to quaternary structure, homodimer. The cofactor is Mg(2+).

The enzyme catalyses a tRNA precursor + 2 CTP + ATP = a tRNA with a 3' CCA end + 3 diphosphate. The catalysed reaction is a tRNA with a 3' CCA end + 2 CTP + ATP = a tRNA with a 3' CCACCA end + 3 diphosphate. Its function is as follows. Catalyzes the addition and repair of the essential 3'-terminal CCA sequence in tRNAs without using a nucleic acid template. Adds these three nucleotides in the order of C, C, and A to the tRNA nucleotide-73, using CTP and ATP as substrates and producing inorganic pyrophosphate. tRNA 3'-terminal CCA addition is required both for tRNA processing and repair. Also involved in tRNA surveillance by mediating tandem CCA addition to generate a CCACCA at the 3' terminus of unstable tRNAs. While stable tRNAs receive only 3'-terminal CCA, unstable tRNAs are marked with CCACCA and rapidly degraded. This Methanococcus maripaludis (strain DSM 14266 / JCM 13030 / NBRC 101832 / S2 / LL) protein is CCA-adding enzyme.